The following is a 357-amino-acid chain: Homoserine kinase (357 aa).

This sequence belongs to the GHMP kinase family. Homoserine kinase subfamily.

The enzyme catalyses L-homoserine + ATP = O-phospho-L-homoserine + ADP + H(+). It participates in amino-acid biosynthesis; L-threonine biosynthesis; L-threonine from L-aspartate: step 4/5. In terms of biological role, commits homoserine to the threonine biosynthesis pathway by catalyzing its O-phosphorylation. In Cryptococcus neoformans var. grubii serotype A (strain H99 / ATCC 208821 / CBS 10515 / FGSC 9487) (Filobasidiella neoformans var. grubii), this protein is Homoserine kinase.